Reading from the N-terminus, the 85-residue chain is uncharacterized protein (85 aa).

The residue at position 22 (S22) is a Phosphoserine.

It localises to the cytoplasm. The protein resides in the nucleus. This is an uncharacterized protein from Saccharomyces cerevisiae (strain ATCC 204508 / S288c) (Baker's yeast).